A 449-amino-acid chain; its full sequence is TNF receptor-associated factor family protein DDB_G0272340 (449 aa).

The RING-type; degenerate zinc-finger motif lies at 33-76 (CPICEECIMDVNKCEALQCKEGHVHCRLCWMKSLESKKECMTCR). 2 TRAF-type zinc fingers span residues 133–187 (GHIK…IDDS) and 189–251 (VHYS…SELS). Residues 263–309 (MEATIDQHICKFEKSEKEYKKLELEYNRLKDDFKILQSELKVIRELK) adopt a coiled-coil conformation. One can recognise an MATH domain in the interval 311 to 437 (NYQNKWVITN…QNSVTLNINI (127 aa)).

The protein belongs to the TNF receptor-associated factor family. A subfamily.

It is found in the cytoplasm. Probable adapter protein and signal transducer that links members of the tumor necrosis factor receptor family to different signaling pathways by association with the receptor cytoplasmic domain and kinases. In Dictyostelium discoideum (Social amoeba), this protein is TNF receptor-associated factor family protein DDB_G0272340.